The following is a 122-amino-acid chain: Phycocyanin PC645 alpha-2 subunit (122 aa).

Aspartate 54 and arginine 68 together coordinate (2R,3E)-phycocyanobilin. The mesobiliverdin site is built by cysteine 70, lysine 76, glutamate 77, and cysteine 92.

This sequence belongs to the phycoerythrin family. In terms of assembly, heterotetramer of 2 different alpha chains and 2 identical beta chains which form 2 alpha-beta heterodimers within the heterotetramer. Contains two phycocyanobilin chromophores and one mesobiliverdin chromophore with binding mediated by both the alpha and beta subunits.

It localises to the plastid. The protein resides in the chloroplast thylakoid membrane. In terms of biological role, light-harvesting photosynthetic tetrapyrrole chromophore-protein from the phycobiliprotein complex. The polypeptide is Phycocyanin PC645 alpha-2 subunit (Chroomonas sp. (strain CCMP270)).